A 773-amino-acid polypeptide reads, in one-letter code: Elongin-A (773 aa).

The 76-residue stretch at 4 to 79 (ESALQVVEKL…AQWKKLVPVE (76 aa)) folds into the TFIIS N-terminal domain. Residues 79-93 (ERNNEAEDQDFEKSN) are compositionally biased toward basic and acidic residues. The disordered stretch occupies residues 79–480 (ERNNEAEDQD…PRKVPTDVLP (402 aa)). Over residues 112 to 124 (YQESWQASGSQPY) the composition is skewed to polar residues. Residues 136-156 (LPELERPHKVAHGHERRDERK) are compositionally biased toward basic and acidic residues. The segment covering 162–174 (SPPYSSDPESSDY) has biased composition (low complexity). S195 bears the Phosphoserine mark. Positions 239-248 (KPHKSSHKEK) are enriched in basic residues. 2 stretches are compositionally biased toward basic and acidic residues: residues 249–265 (RPVD…MGRE) and 271–304 (SSKE…EGNS). S310 carries the post-translational modification Phosphoserine. 2 stretches are compositionally biased toward basic and acidic residues: residues 317-339 (SDNH…KNKQ) and 368-380 (QEGK…DRKS). 2 positions are modified to phosphoserine: S380 and S383. K430 is subject to N6-acetyllysine. S515 is modified (phosphoserine). Residues 521–680 (EAGFTGRRMN…PPRDVRRRQE (160 aa)) are activation domain. The BC-box stretch occupies residues 549–558 (TLHQQCIRVL). Residues 565–609 (IFEVGGVPYSVLEPVLERCTPDQLYRIEECNHVLIEETDQLWKVH) form the F-box domain. Positions 671–747 (PPRDVRRRQE…VASSSVSYDP (77 aa)) are disordered. Residues 704–718 (SSHVPASNSSSSFHS) are compositionally biased toward low complexity. The segment covering 728 to 744 (PSTSSAHLAPVASSSVS) has biased composition (polar residues).

In terms of assembly, heterotrimer of an A (ELOA, ELOA2 or ELOA3P), ELOB and ELOC subunit. Part of a multisubunit ubiquitin ligase complex consisting of elongin BC complex (ELOB and ELOC), elongin A/ELOA, RBX1 and CUL5. Interacts with ERCC6; the interaction is induced by DNA damaging agents or inhibitors of RNA polymerase II elongation. Interacts (via BC-box) with CUL5.

It localises to the nucleus. SIII, also known as elongin, is a general transcription elongation factor that increases the RNA polymerase II transcription elongation past template-encoded arresting sites. Subunit A is transcriptionally active and its transcription activity is strongly enhanced by binding to the dimeric complex of the SIII regulatory subunits B and C (elongin BC complex). Functionally, as part of a multisubunit complex composed of elongin BC complex (ELOB and ELOC), elongin A/ELOA, RBX1 and CUL5; polyubiquitinates monoubiquitinated POLR2A. This chain is Elongin-A (Eloa), found in Rattus norvegicus (Rat).